The following is a 640-amino-acid chain: MGKIIGIDLGTTNSCVSVMQGSQPTVIENSEGNRTTPSIIALTKTGDRLVGQAAKRQAITNPKNTIFSIKRFMGRKYDEINDEKKLAPYEIINEGGEARVKINDKIYSPQEVSAMILQKMKQTAEDFLGEKVTEAVITVPAYFNDAQRQATKDAGRIAGLDVKRIINEPTAAALAYGLDRKQTSEKVAVFDLGGGTFDISVLELGDGVFEVKSTDGDTHLGGDNFDQKIIDYIADEFKKQEGIDLRKDAITLQRLKEAAEKAKIELSSRTDTEINLPFITATQEGPKHLVINLTRAKFEALCADLFDKILDPCRRAIKNSKLEMKEIDEVVLVGGSTRIPKVQALVKDFFGKEPNKSVNPDEVVAIGAAIQGGVLKGDVTDVLLLDVTPLSLGIETLGGVMTKLIDANTTIPTRKQEVFSTAGDNQTSVEVHVLQGERPMATDNKTLGRFHLGDIPPSPRGIPQIEVTFDIDSNGILHVSAKDKATGKEQSIKIESSSKLTDAEISKMKEDAKEHAAEDQKRKEEIDTRNIADSLIFSTEKQLKELGDKIPADKRPVLEGSLEKLKEAYKNGTVESLKSAMEELNKEWSEIASHLYQSQGPESSQPETAAQSDSGEKSKKNSGDGNVENAEYEVIDGNDK.

Residue Thr196 is modified to Phosphothreonine; by autocatalysis. Disordered regions lie at residues 487–526 (GKEQ…KEEI) and 593–640 (SHLY…GNDK). The segment covering 501–526 (TDAEISKMKEDAKEHAAEDQKRKEEI) has biased composition (basic and acidic residues). Polar residues predominate over residues 595–613 (LYQSQGPESSQPETAAQSD). Acidic residues predominate over residues 630–640 (AEYEVIDGNDK).

This sequence belongs to the heat shock protein 70 family.

Acts as a chaperone. This is Chaperone protein DnaK from Pelodictyon phaeoclathratiforme (strain DSM 5477 / BU-1).